Consider the following 288-residue polypeptide: Aquaporin NIP2-1 (288 aa).

Met-1 bears the N-acetylmethionine mark. The next 2 membrane-spanning stretches (helical) occupy residues 50–70 and 77–97; these read LLAE…AIAV and VVTL…LVYC. The NPA 1 signature appears at 106-108; the sequence is NPA. The next 3 membrane-spanning stretches (helical) occupy residues 126–146, 170–190, and 202–222; these read AYIT…RLLF, LQAF…VCAV, and GLII…VSGA. Residues 225 to 227 carry the NPA 2 motif; the sequence is NPA. The helical transmembrane segment at 234–254 threads the bilayer; it reads LVWGCYKGIWIYLLAPTLGAV. Residue Ser-278 is modified to Phosphoserine.

It belongs to the MIP/aquaporin (TC 1.A.8) family. NIP (TC 1.A.8.12) subfamily. Specifically expressed in roots with high expression in root elongation zone and root stele.

The protein localises to the endoplasmic reticulum membrane. Its function is as follows. Low water transport activity in yeast cells. The polypeptide is Aquaporin NIP2-1 (NIP2-1) (Arabidopsis thaliana (Mouse-ear cress)).